Consider the following 310-residue polypeptide: Olfactory receptor 4C11 (310 aa).

Residues 1–23 (MQQNNSVPEFILLGLTQDPLRQK) are Extracellular-facing. The N-linked (GlcNAc...) asparagine glycan is linked to Asn-4. The helical transmembrane segment at 24–47 (IVFVIFLIFYMGTVVGNMLIIVTI) threads the bilayer. Over 48-55 (KSSRTLGS) the chain is Cytoplasmic. Residues 56 to 77 (PMYFFLFYLSFADSCFSTSTAP) form a helical membrane-spanning segment. The Extracellular portion of the chain corresponds to 78–98 (RLIVDALSEKKIITYNECMTQ). An intrachain disulfide couples Cys-95 to Cys-187. Residues 99–118 (VFALHLFGCMEIFVLILMAV) traverse the membrane as a helical segment. At 119–137 (DRYVAICKPLRYPTIMSQQ) the chain is on the cytoplasmic side. A helical transmembrane segment spans residues 138–156 (VCIILIVLAWIGSLIHSTA). Residues 157-193 (QIILALRLPFCGPYLIDHYCCDLQPLLKLACMDTYMI) are Extracellular-facing. The chain crosses the membrane as a helical span at residues 194–217 (NLLLVSNSGAICSSSFMILIISYI). Residues 218–233 (VILHSLRNHSAKGKKK) lie on the Cytoplasmic side of the membrane. A helical transmembrane segment spans residues 234–256 (ALSACTSHIIVVILFFGPCIFIY). Residues 257 to 267 (TRPPTTFPMDK) lie on the Extracellular side of the membrane. Residues 268-287 (MVAVFYTIGTPFLNPLIYTL) traverse the membrane as a helical segment. Residues 288–310 (RNAEVKNAMRKLWHGKIISENKG) are Cytoplasmic-facing.

It belongs to the G-protein coupled receptor 1 family.

The protein localises to the cell membrane. In terms of biological role, odorant receptor. The sequence is that of Olfactory receptor 4C11 (OR4C11) from Homo sapiens (Human).